We begin with the raw amino-acid sequence, 314 residues long: Ecto-ADP-ribosyltransferase 4 (314 aa).

An N-terminal signal peptide occupies residues 1–46; it reads MGPLINRCKKILLPTTVPPATMRIWLLGGLLPFLLLLSGLQRPTEG. Disulfide bonds link Cys-69–Cys-280 and Cys-182–Cys-231. The TR mART core domain occupies 91 to 276; it reads KNYFRMWQKA…LQLRSTGNLS (186 aa). N-linked (GlcNAc...) asparagine glycosylation is present at Asn-114. Residue Tyr-126 participates in NAD(+) binding. Asn-178 carries N-linked (GlcNAc...) asparagine glycosylation. An NAD(+)-binding site is contributed by Gln-206. N-linked (GlcNAc...) asparagine glycosylation is present at Asn-222. Ser-240 is a binding site for NAD(+). N-linked (GlcNAc...) asparagine glycans are attached at residues Asn-257 and Asn-274. Ala-285 is lipidated: GPI-anchor amidated alanine. The propeptide at 286–314 is removed in mature form; it reads SSKKCIPDPIAIASLSFLTSVIIFSKSRV.

This sequence belongs to the Arg-specific ADP-ribosyltransferase family. As to expression, expressed in spleen and T-cells.

Its subcellular location is the cell membrane. It catalyses the reaction L-arginyl-[protein] + NAD(+) = N(omega)-(ADP-D-ribosyl)-L-arginyl-[protein] + nicotinamide + H(+). This Homo sapiens (Human) protein is Ecto-ADP-ribosyltransferase 4 (ART4).